The chain runs to 280 residues: Type 1 encapsulin shell protein (280 aa).

It belongs to the encapsulin family. Family 1 subfamily. As to quaternary structure, this encapsulin nanocompartment is formed by 60 subunits; monomers form pentamers which assemble to form shells. There are 12 pores where the pentamers meet as well as 3-fold axis channels and dimer channels; none are larger than 3-4 Angstroms in diameter. The N-terminus of the protein is inside the shell, the C-terminus is outside.

The protein resides in the encapsulin nanocompartment. Its function is as follows. Shell component of a type 1 encapsulin nanocompartment. Assembles into proteinaceous icosahedral shells 24 nm in diameter in the presence and absence of its ferritin cargo protein. The center of cargo-loaded nanocompartments is loaded with iron. The empty encapsulin nanocompartment sequesters about 2200 Fe ions while the cargo-loaded nanocompartment can maximally sequester about 4150 Fe ions. Does not have any detectable ferroxidase activity. In Rhodospirillum rubrum (strain ATCC 11170 / ATH 1.1.1 / DSM 467 / LMG 4362 / NCIMB 8255 / S1), this protein is Type 1 encapsulin shell protein.